The sequence spans 118 residues: Large ribosomal subunit protein bL20c (118 aa).

This sequence belongs to the bacterial ribosomal protein bL20 family.

The protein localises to the plastid. Its function is as follows. Binds directly to 23S ribosomal RNA and is necessary for the in vitro assembly process of the 50S ribosomal subunit. It is not involved in the protein synthesizing functions of that subunit. The sequence is that of Large ribosomal subunit protein bL20c from Aneura mirabilis (Parasitic liverwort).